Reading from the N-terminus, the 466-residue chain is 55 kDa erythrocyte membrane protein (466 aa).

T2 is subject to N-acetylthreonine. Phosphoserine occurs at positions 13 and 19. At T49 the chain carries Phosphothreonine. A phosphoserine mark is found at S52, S57, and S110. The PDZ domain occupies 71-152 (LIQFEKVTEE…MISLKVIPNQ (82 aa)). The SH3 domain maps to 158 to 228 (ALQMFMRAQF…PSPELQEWRV (71 aa)). S243 carries the post-translational modification Phosphoserine. An interaction with PALS1 region spans residues 268 to 466 (VVSYEEVVRL…PQWVPVSWVY (199 aa)). The 170-residue stretch at 282–451 (RKTLVLIGAS…TLKKLQEAFD (170 aa)) folds into the Guanylate kinase-like domain.

This sequence belongs to the MAGUK family. As to quaternary structure, heterodimer with PALS1. Interacts with DLG5 and NF2. Interacts (via guanylate kinase-like domain) with WHRN (via third PDZ domain). Palmitoylated. Ubiquitous.

The protein resides in the cell membrane. The protein localises to the cell projection. Its subcellular location is the stereocilium. In terms of biological role, essential regulator of neutrophil polarity. Regulates neutrophil polarization by regulating AKT1 phosphorylation through a mechanism that is independent of PIK3CG activity. The polypeptide is 55 kDa erythrocyte membrane protein (MPP1) (Homo sapiens (Human)).